We begin with the raw amino-acid sequence, 587 residues long: Glutaconyl-CoA decarboxylase subunit alpha (587 aa).

In terms of domain architecture, CoA carboxyltransferase N-terminal spans 31-298; sequence LKKIEEEIHQ…YDPEFFRVDD (268 aa). Residues 31 to 558 form a carboxyltransferase region; it reads LKKIEEEIHQ…RGYVEAFTEA (528 aa). Residues 295-558 enclose the CoA carboxyltransferase C-terminal domain; sequence RVDDPKAPAF…RGYVEAFTEA (264 aa).

Heterooctamer consisting of two alpha, two beta, two gamma and two delta subunits.

It catalyses the reaction (2E)-glutaconyl-CoA + Na(+)(in) + H(+) = (2E)-butenoyl-CoA + Na(+)(out) + CO2. The protein operates within amino-acid degradation; L-glutamate degradation via hydroxyglutarate pathway; crotonoyl-CoA from L-glutamate: step 5/5. In terms of biological role, decarboxylase subunit of the primary sodium pump glutaconyl-CoA decarboxylase (GCD). In Acidaminococcus fermentans (strain ATCC 25085 / DSM 20731 / CCUG 9996 / CIP 106432 / VR4), this protein is Glutaconyl-CoA decarboxylase subunit alpha (gcdA).